Consider the following 401-residue polypeptide: Nicotinate phosphoribosyltransferase (401 aa).

His221 is subject to Phosphohistidine; by autocatalysis.

Belongs to the NAPRTase family. Transiently phosphorylated on a His residue during the reaction cycle. Phosphorylation strongly increases the affinity for substrates and increases the rate of nicotinate D-ribonucleotide production. Dephosphorylation regenerates the low-affinity form of the enzyme, leading to product release.

The enzyme catalyses nicotinate + 5-phospho-alpha-D-ribose 1-diphosphate + ATP + H2O = nicotinate beta-D-ribonucleotide + ADP + phosphate + diphosphate. The protein operates within cofactor biosynthesis; NAD(+) biosynthesis; nicotinate D-ribonucleotide from nicotinate: step 1/1. Its function is as follows. Catalyzes the synthesis of beta-nicotinate D-ribonucleotide from nicotinate and 5-phospho-D-ribose 1-phosphate at the expense of ATP. This chain is Nicotinate phosphoribosyltransferase, found in Serratia proteamaculans (strain 568).